A 52-amino-acid chain; its full sequence is MPVEEVVKVSRNYQVTIPAKVRQKFPVKEGDLVKVIYDENGGVVKIQILDSP.

The 48-residue stretch at 4–51 folds into the SpoVT-AbrB domain; it reads EEVVKVSRNYQVTIPAKVRQKFPVKEGDLVKVIYDENGGVVKIQILDS.

The protein is Repressor-like protein SSo7c3 of Saccharolobus solfataricus (strain ATCC 35092 / DSM 1617 / JCM 11322 / P2) (Sulfolobus solfataricus).